The following is a 417-amino-acid chain: Gamma-glutamyl phosphate reductase (417 aa).

Belongs to the gamma-glutamyl phosphate reductase family.

The protein resides in the cytoplasm. It catalyses the reaction L-glutamate 5-semialdehyde + phosphate + NADP(+) = L-glutamyl 5-phosphate + NADPH + H(+). Its pathway is amino-acid biosynthesis; L-proline biosynthesis; L-glutamate 5-semialdehyde from L-glutamate: step 2/2. In terms of biological role, catalyzes the NADPH-dependent reduction of L-glutamate 5-phosphate into L-glutamate 5-semialdehyde and phosphate. The product spontaneously undergoes cyclization to form 1-pyrroline-5-carboxylate. The protein is Gamma-glutamyl phosphate reductase of Escherichia coli (strain K12 / MC4100 / BW2952).